Consider the following 285-residue polypeptide: Release factor glutamine methyltransferase (285 aa).

Residues 124 to 128 (GTGSG), aspartate 147, and asparagine 190 contribute to the S-adenosyl-L-methionine site. 190-193 (NPPY) contributes to the substrate binding site.

It belongs to the protein N5-glutamine methyltransferase family. PrmC subfamily.

The catalysed reaction is L-glutaminyl-[peptide chain release factor] + S-adenosyl-L-methionine = N(5)-methyl-L-glutaminyl-[peptide chain release factor] + S-adenosyl-L-homocysteine + H(+). Functionally, methylates the class 1 translation termination release factors RF1/PrfA and RF2/PrfB on the glutamine residue of the universally conserved GGQ motif. The polypeptide is Release factor glutamine methyltransferase (Flavobacterium psychrophilum (strain ATCC 49511 / DSM 21280 / CIP 103535 / JIP02/86)).